The primary structure comprises 421 residues: D-inositol 3-phosphate glycosyltransferase (421 aa).

His-9 lines the 1D-myo-inositol 3-phosphate pocket. UDP-N-acetyl-alpha-D-glucosamine is bound by residues 15-16 and Gly-23; that span reads QP. 1D-myo-inositol 3-phosphate-binding positions include 20–25, Lys-78, Tyr-110, Thr-134, and Arg-154; that span reads DAGGMN. UDP-N-acetyl-alpha-D-glucosamine-binding residues include Arg-231, Lys-236, and Arg-294. Tyr-303, Gln-304, and Ala-306 together coordinate Mg(2+). Residues Glu-316 and Glu-324 each coordinate UDP-N-acetyl-alpha-D-glucosamine. Thr-330 provides a ligand contact to Mg(2+).

This sequence belongs to the glycosyltransferase group 1 family. MshA subfamily. Homodimer.

It carries out the reaction 1D-myo-inositol 3-phosphate + UDP-N-acetyl-alpha-D-glucosamine = 1D-myo-inositol 2-acetamido-2-deoxy-alpha-D-glucopyranoside 3-phosphate + UDP + H(+). Its function is as follows. Catalyzes the transfer of a N-acetyl-glucosamine moiety to 1D-myo-inositol 3-phosphate to produce 1D-myo-inositol 2-acetamido-2-deoxy-glucopyranoside 3-phosphate in the mycothiol biosynthesis pathway. The polypeptide is D-inositol 3-phosphate glycosyltransferase (Corynebacterium aurimucosum (strain ATCC 700975 / DSM 44827 / CIP 107346 / CN-1) (Corynebacterium nigricans)).